The following is an 872-amino-acid chain: Chaperone protein ClpB 2 (872 aa).

Residues 6–148 (PNKFTEKAWE…AEIIKQIRGT (143 aa)) form the Clp R domain. 2 repeat regions span residues 9–73 (FTEK…IAQQ) and 85–148 (LGRS…IRGT). The interval 161 to 342 (ESLEKYGRDL…RRFQEVLVDE (182 aa)) is NBD1. Residue 208–215 (GEPGVGKT) participates in ATP binding. A linker region spans residues 343-551 (PNVLDTISIL…IAEIISKWTG (209 aa)). Positions 393–527 (IDLVDEAAAK…LETQLAEQQT (135 aa)) form a coiled coil. The segment at 561–772 (EKEKLLHLED…RVDETIIFHG (212 aa)) is NBD2. 611 to 618 (GPTGVGKT) serves as a coordination point for ATP. Residues 773 to 872 (LQKSELRSIV…TSLRGDLVIV (100 aa)) form a C-terminal region.

The protein belongs to the ClpA/ClpB family. Homohexamer. The oligomerization is ATP-dependent.

Its subcellular location is the cytoplasm. Functionally, part of a stress-induced multi-chaperone system, it is involved in the recovery of the cell from heat-induced damage, in cooperation with DnaK, DnaJ and GrpE. Acts before DnaK, in the processing of protein aggregates. Protein binding stimulates the ATPase activity; ATP hydrolysis unfolds the denatured protein aggregates, which probably helps expose new hydrophobic binding sites on the surface of ClpB-bound aggregates, contributing to the solubilization and refolding of denatured protein aggregates by DnaK. The polypeptide is Chaperone protein ClpB 2 (clpB2) (Synechocystis sp. (strain ATCC 27184 / PCC 6803 / Kazusa)).